An 80-amino-acid chain; its full sequence is U19-lycotoxin-Ls1a (80 aa).

The N-terminal stretch at 1–22 is a signal peptide; that stretch reads MSPKVQALIFIVGLITLLAAHA. The propeptide occupies 23 to 34; the sequence is QEELSDNIESER. Disulfide bonds link Cys-36–Cys-50, Cys-43–Cys-55, Cys-49–Cys-66, and Cys-57–Cys-64.

The protein belongs to the neurotoxin 02 (plectoxin) family. 05 (U19-lycotoxin) subfamily. In terms of tissue distribution, expressed by the venom gland.

It is found in the secreted. The polypeptide is U19-lycotoxin-Ls1a (Lycosa singoriensis (Wolf spider)).